A 119-amino-acid chain; its full sequence is Beta-2-microglobulin (119 aa).

Positions 1-20 (MARLVVVALLVLLCLSGLEA) are cleaved as a signal peptide. Residues 25-114 (PKIQVYSRHP…VTFTAPKTVK (90 aa)) form the Ig-like C1-type domain. An intrachain disulfide couples cysteine 45 to cysteine 100.

This sequence belongs to the beta-2-microglobulin family. Heterodimer of an alpha chain and a beta chain. Beta-2-microglobulin is the beta-chain of major histocompatibility complex class I molecules.

It is found in the secreted. Component of the class I major histocompatibility complex (MHC). Involved in the presentation of peptide antigens to the immune system. The chain is Beta-2-microglobulin (B2M) from Chiropotes satanas (Brown-bearded saki).